The chain runs to 404 residues: 5-aminolevulinate synthase (404 aa).

Positions 21 and 136 each coordinate substrate. Positions 188, 216, and 244 each coordinate pyridoxal 5'-phosphate. Lysine 247 is a catalytic residue. Lysine 247 is subject to N6-(pyridoxal phosphate)lysine. Threonine 276 and threonine 277 together coordinate pyridoxal 5'-phosphate. Threonine 362 provides a ligand contact to substrate.

Belongs to the class-II pyridoxal-phosphate-dependent aminotransferase family. Homodimer. It depends on pyridoxal 5'-phosphate as a cofactor.

The enzyme catalyses succinyl-CoA + glycine + H(+) = 5-aminolevulinate + CO2 + CoA. The protein operates within porphyrin-containing compound metabolism; protoporphyrin-IX biosynthesis; 5-aminolevulinate from glycine: step 1/1. This is 5-aminolevulinate synthase (hemA) from Rhizobium meliloti (strain 1021) (Ensifer meliloti).